The primary structure comprises 367 residues: Peptide chain release factor 2 (367 aa).

Gln247 carries the N5-methylglutamine modification.

Belongs to the prokaryotic/mitochondrial release factor family. Methylated by PrmC. Methylation increases the termination efficiency of RF2.

It is found in the cytoplasm. In terms of biological role, peptide chain release factor 2 directs the termination of translation in response to the peptide chain termination codons UGA and UAA. The chain is Peptide chain release factor 2 from Caulobacter sp. (strain K31).